The following is a 494-amino-acid chain: Cytochrome P450 monooxygenase acrF (494 aa).

C420 lines the heme pocket.

Belongs to the cytochrome P450 family. The cofactor is heme.

It functions in the pathway secondary metabolite biosynthesis. Its function is as follows. Cytochrome P450 monooxygenase; part of the cluster that mediates the biosynthesis of acurin A, a highly reduced polyketide coupled to a serine via a peptide bond. The activities of the highly reducing polyketide synthase acrA and the nonribosomal peptide synthetase acrB are collectively responsible for the synthesis of the acurin A core structure with a heptaketide backbone produced by acrA covalently fused to a L-serine by acrB. After the formation of the PK-NRP hybrid product, it is detached from acrB by reductive release to set up the formation of the lactam ring by aldol condensation. The hydrolyase acrC then catalyzes water loss to generate a double bond in the ring. This double bond is probably reduced, which is followed by three oxidations at C-22 to generate the carboxylic acid moiety, involving probably the FAD-binding monooxygenase acrE and the cytochrome P450 monooxygenases acrD and acrF. Finally, a last methylation step performed by the O-methyltransferase acrG leads to the production of acurin A. This Aspergillus aculeatus (strain ATCC 16872 / CBS 172.66 / WB 5094) protein is Cytochrome P450 monooxygenase acrF.